The primary structure comprises 267 residues: Phosphate import ATP-binding protein PstB (267 aa).

Residues Ile21–Ile262 form the ABC transporter domain. Residue Gly53–Ser60 coordinates ATP.

The protein belongs to the ABC transporter superfamily. Phosphate importer (TC 3.A.1.7) family. As to quaternary structure, the complex is composed of two ATP-binding proteins (PstB), two transmembrane proteins (PstC and PstA) and a solute-binding protein (PstS).

Its subcellular location is the cell inner membrane. It carries out the reaction phosphate(out) + ATP + H2O = ADP + 2 phosphate(in) + H(+). Part of the ABC transporter complex PstSACB involved in phosphate import. Responsible for energy coupling to the transport system. The sequence is that of Phosphate import ATP-binding protein PstB from Mesorhizobium japonicum (strain LMG 29417 / CECT 9101 / MAFF 303099) (Mesorhizobium loti (strain MAFF 303099)).